A 353-amino-acid polypeptide reads, in one-letter code: Lactosylceramide 4-alpha-galactosyltransferase (353 aa).

At Met-1–Thr-22 the chain is on the cytoplasmic side. Residues Leu-23–Val-43 form a helical; Signal-anchor for type II membrane protein membrane-spanning segment. Residues Gly-44 to Leu-353 are Lumenal-facing. N-linked (GlcNAc...) asparagine glycosylation is present at Asn-121. The DXD motif signature appears at Asp-192–Asp-194. Asn-203 carries an N-linked (GlcNAc...) asparagine glycan.

The protein belongs to the glycosyltransferase 32 family.

It localises to the golgi apparatus membrane. The catalysed reaction is a beta-D-Gal-(1-&gt;4)-beta-D-Glc-(1&lt;-&gt;1)-Cer(d18:1(4E)) + UDP-alpha-D-galactose = a globoside Gb3Cer (d18:1(4E)) + UDP + H(+). It catalyses the reaction a beta-D-Gal-(1&lt;-&gt;1')-ceramide + UDP-alpha-D-galactose = alpha-D-Gal-(1-&gt;4)-beta-D-Gal-(1&lt;-&gt;1')-Cer + UDP + H(+). It functions in the pathway glycolipid biosynthesis. Functionally, catalyzes the transfer of galactose from UDP-alpha-D-galactose to lactosylceramide/beta-D-galactosyl-(1-&gt;4)-beta-D-glucosyl-(1&lt;-&gt;1)-ceramide(d18:1(4E)) to produce globotriaosylceramide/globoside Gb3Cer (d18:1(4E)). Also able to transfer galactose to galactosylceramide/beta-D-Gal-(1&lt;-&gt;1')-Cer. Globoside Gb3Cer is a glycosphingolipid of the globo serie, one of the major types of neutral root structures of glycosphingolipids, that constitute a significant portion of mammalian cell membranes. In Pan troglodytes (Chimpanzee), this protein is Lactosylceramide 4-alpha-galactosyltransferase (A4GALT).